The primary structure comprises 476 residues: Undecaprenyl-phosphate galactose phosphotransferase (476 aa).

Transmembrane regions (helical) follow at residues 15-35 (IFLAISDLIFFNLALWFSLGC), 52-72 (LDTRVITHFILSVVCVGWFWI), 93-113 (TIVIFAIFDLALIAFTKWQFS), 115-135 (YVWVFCWTFALILVPFFRALT), and 283-303 (FDIVCSIMILIIASPLMIYLW). Over 304–476 (YKVTRDGGPA…KVVLRRDGAY (173 aa)) the chain is Cytoplasmic.

It belongs to the bacterial sugar transferase family.

It localises to the cell inner membrane. The enzyme catalyses di-trans,octa-cis-undecaprenyl phosphate + UDP-alpha-D-galactose = alpha-D-galactosyl-di-trans,octa-cis-undecaprenyl diphosphate + UMP. It functions in the pathway bacterial outer membrane biogenesis; LPS O-antigen biosynthesis. Its function is as follows. Is responsible for transferring galactose-1-phosphate to the lipid precursor undecaprenol phosphate in the first steps of O-polysaccharide biosynthesis. The polypeptide is Undecaprenyl-phosphate galactose phosphotransferase (rfbP) (Salmonella typhimurium (strain LT2 / SGSC1412 / ATCC 700720)).